Here is a 113-residue protein sequence, read N- to C-terminus: uncharacterized protein (113 aa).

The helical transmembrane segment at 4-26 (VLFKIAVALLYLLSFFLHRLHLR) threads the bilayer. The segment at 32–74 (RRRRRRHHRRHHRRHHHHRRRRRRRRRRRRRHHRHHHHRHRRR) is disordered.

It is found in the membrane. This is an uncharacterized protein from Saccharomyces cerevisiae (strain ATCC 204508 / S288c) (Baker's yeast).